A 192-amino-acid chain; its full sequence is Pyridoxal 5'-phosphate synthase subunit PdxT (192 aa).

47 to 49 (GES) provides a ligand contact to L-glutamine. The Nucleophile role is filled by cysteine 79. L-glutamine contacts are provided by residues arginine 106 and 134–135 (IR). Catalysis depends on charge relay system residues histidine 170 and glutamate 172.

This sequence belongs to the glutaminase PdxT/SNO family. As to quaternary structure, in the presence of PdxS, forms a dodecamer of heterodimers. Only shows activity in the heterodimer.

The enzyme catalyses aldehydo-D-ribose 5-phosphate + D-glyceraldehyde 3-phosphate + L-glutamine = pyridoxal 5'-phosphate + L-glutamate + phosphate + 3 H2O + H(+). The catalysed reaction is L-glutamine + H2O = L-glutamate + NH4(+). Its pathway is cofactor biosynthesis; pyridoxal 5'-phosphate biosynthesis. Functionally, catalyzes the hydrolysis of glutamine to glutamate and ammonia as part of the biosynthesis of pyridoxal 5'-phosphate. The resulting ammonia molecule is channeled to the active site of PdxS. The polypeptide is Pyridoxal 5'-phosphate synthase subunit PdxT (Anoxybacillus flavithermus (strain DSM 21510 / WK1)).